Here is a 265-residue protein sequence, read N- to C-terminus: Adenosine 5'-phosphosulfate reductase (265 aa).

Residues cysteine 135, cysteine 136, cysteine 218, and cysteine 221 each contribute to the [4Fe-4S] cluster site. The active-site Nucleophile; cysteine thiosulfonate intermediate is the cysteine 246.

It belongs to the PAPS reductase family. CysH subfamily. Requires [4Fe-4S] cluster as cofactor.

The protein localises to the cytoplasm. It catalyses the reaction [thioredoxin]-disulfide + sulfite + AMP + 2 H(+) = adenosine 5'-phosphosulfate + [thioredoxin]-dithiol. The protein operates within sulfur metabolism; hydrogen sulfide biosynthesis; sulfite from sulfate. Its function is as follows. Catalyzes the formation of sulfite from adenosine 5'-phosphosulfate (APS) using thioredoxin as an electron donor. This chain is Adenosine 5'-phosphosulfate reductase, found in Rhizobium meliloti (strain 1021) (Ensifer meliloti).